Consider the following 76-residue polypeptide: Acyl carrier protein (76 aa).

Residues 1-75 (MIFEKIKDLI…DIVFYITKNT (75 aa)) form the Carrier domain. Ser-35 is modified (O-(pantetheine 4'-phosphoryl)serine).

Belongs to the acyl carrier protein (ACP) family. Post-translationally, 4'-phosphopantetheine is transferred from CoA to a specific serine of apo-ACP by AcpS. This modification is essential for activity because fatty acids are bound in thioester linkage to the sulfhydryl of the prosthetic group.

It localises to the cytoplasm. It functions in the pathway lipid metabolism; fatty acid biosynthesis. Functionally, carrier of the growing fatty acid chain in fatty acid biosynthesis. In Aster yellows witches'-broom phytoplasma (strain AYWB), this protein is Acyl carrier protein.